We begin with the raw amino-acid sequence, 251 residues long: MSEGTPNSTHFGYKTVESDQKADMVAGVFHSVAAKYDIMNDVMSFGIHRMWKRFTIESAGARPGMKVLDLAGGTGDLTAKFSHIVGDKGQVTLADINDSMLKVGREKLRDKGIVGNVNYVQANAEALPFPDNHFDIITIAFGLRNVTDKDAAIRSMLRVLKPGGKLLVLEFSKPKHDVMRKVYDLYSFKVMPKMGALITQDAESYEYLAESIRMHPDQETLKGMMVDAGFEQVEYTNMTDGIVALHKGYKF.

Residues Thr-74, Asp-95, and 123–124 (NA) contribute to the S-adenosyl-L-methionine site.

Belongs to the class I-like SAM-binding methyltransferase superfamily. MenG/UbiE family.

It catalyses the reaction a 2-demethylmenaquinol + S-adenosyl-L-methionine = a menaquinol + S-adenosyl-L-homocysteine + H(+). It carries out the reaction a 2-methoxy-6-(all-trans-polyprenyl)benzene-1,4-diol + S-adenosyl-L-methionine = a 5-methoxy-2-methyl-3-(all-trans-polyprenyl)benzene-1,4-diol + S-adenosyl-L-homocysteine + H(+). It participates in quinol/quinone metabolism; menaquinone biosynthesis; menaquinol from 1,4-dihydroxy-2-naphthoate: step 2/2. The protein operates within cofactor biosynthesis; ubiquinone biosynthesis. Functionally, methyltransferase required for the conversion of demethylmenaquinol (DMKH2) to menaquinol (MKH2) and the conversion of 2-polyprenyl-6-methoxy-1,4-benzoquinol (DDMQH2) to 2-polyprenyl-3-methyl-6-methoxy-1,4-benzoquinol (DMQH2). The sequence is that of Ubiquinone/menaquinone biosynthesis C-methyltransferase UbiE from Shewanella woodyi (strain ATCC 51908 / MS32).